The following is a 1241-amino-acid chain: ATP-dependent helicase/nuclease subunit A (1241 aa).

The UvrD-like helicase ATP-binding domain occupies 12 to 485; that stretch reads SQWTDDQWKA…IDLAKNFRSR (474 aa). Residue 33–40 participates in ATP binding; that stretch reads AAAGSGKT. The UvrD-like helicase C-terminal domain maps to 505–805; sequence GEIDYDADAE…RIMTIHKSKG (301 aa).

This sequence belongs to the helicase family. AddA subfamily. In terms of assembly, heterodimer of AddA and AddB/RexB. It depends on Mg(2+) as a cofactor.

It catalyses the reaction Couples ATP hydrolysis with the unwinding of duplex DNA by translocating in the 3'-5' direction.. It carries out the reaction ATP + H2O = ADP + phosphate + H(+). The heterodimer acts as both an ATP-dependent DNA helicase and an ATP-dependent, dual-direction single-stranded exonuclease. Recognizes the chi site generating a DNA molecule suitable for the initiation of homologous recombination. The AddA nuclease domain is required for chi fragment generation; this subunit has the helicase and 3' -&gt; 5' nuclease activities. In Bacillus cereus (strain G9842), this protein is ATP-dependent helicase/nuclease subunit A.